Consider the following 165-residue polypeptide: Chorismate pyruvate-lyase (165 aa).

Positions 35, 77, 115, and 156 each coordinate substrate.

The protein belongs to the UbiC family. Monomer.

It is found in the cytoplasm. The enzyme catalyses chorismate = 4-hydroxybenzoate + pyruvate. The protein operates within cofactor biosynthesis; ubiquinone biosynthesis. In terms of biological role, removes the pyruvyl group from chorismate, with concomitant aromatization of the ring, to provide 4-hydroxybenzoate (4HB) for the ubiquinone pathway. The chain is Chorismate pyruvate-lyase from Citrobacter koseri (strain ATCC BAA-895 / CDC 4225-83 / SGSC4696).